The sequence spans 162 residues: Succinate dehydrogenase assembly factor 2-A, mitochondrial (162 aa).

This sequence belongs to the SDHAF2 family. Interacts with the flavoprotein subunit within the SDH catalytic dimer.

The protein localises to the mitochondrion matrix. Plays an essential role in the assembly of succinate dehydrogenase (SDH), an enzyme complex (also referred to as respiratory complex II) that is a component of both the tricarboxylic acid (TCA) cycle and the mitochondrial electron transport chain, and which couples the oxidation of succinate to fumarate with the reduction of ubiquinone (coenzyme Q) to ubiquinol. Required for flavinylation (covalent attachment of FAD) of the flavoprotein subunit of the SDH catalytic dimer. The chain is Succinate dehydrogenase assembly factor 2-A, mitochondrial from Drosophila yakuba (Fruit fly).